Reading from the N-terminus, the 118-residue chain is Putative pterin-4-alpha-carbinolamine dehydratase (118 aa).

The protein belongs to the pterin-4-alpha-carbinolamine dehydratase family.

The catalysed reaction is (4aS,6R)-4a-hydroxy-L-erythro-5,6,7,8-tetrahydrobiopterin = (6R)-L-erythro-6,7-dihydrobiopterin + H2O. This is Putative pterin-4-alpha-carbinolamine dehydratase from Pseudomonas savastanoi pv. phaseolicola (strain 1448A / Race 6) (Pseudomonas syringae pv. phaseolicola (strain 1448A / Race 6)).